The sequence spans 299 residues: MSALQPLIDTYLNHIASQRGLSPVTITNYQSNLAEFVALLNENKVGCWTELDGQLVRLMVKTLHKKGLKARSIATKLSALRSFLDYLVQFDILSNNPAKGIAAPKLDKPLPKNVSVDDMFQLLDIDEKDPLSIRDQCMMELMYSSGLRLSELVGINLQDIKLSAKEIMVTGKGSKQRLLPITDRAVATVKIWLKIRPEFCIKDEKALFVSKQKKRISARNVQARMEKWGLKQALPGHINPHKLRHSFATHMLESSGNLRAVQTLLGHADLATTQIYTHLDFQHLSKIYDQAHPRAKRKK.

Positions 2-88 (SALQPLIDTY…ALRSFLDYLV (87 aa)) constitute a Core-binding (CB) domain. The 181-residue stretch at 109–289 (PLPKNVSVDD…DFQHLSKIYD (181 aa)) folds into the Tyr recombinase domain. Catalysis depends on residues arginine 148, lysine 172, histidine 241, arginine 244, and histidine 267. Residue tyrosine 276 is the O-(3'-phospho-DNA)-tyrosine intermediate of the active site.

The protein belongs to the 'phage' integrase family. XerC subfamily. As to quaternary structure, forms a cyclic heterotetrameric complex composed of two molecules of XerC and two molecules of XerD.

The protein resides in the cytoplasm. Functionally, site-specific tyrosine recombinase, which acts by catalyzing the cutting and rejoining of the recombining DNA molecules. The XerC-XerD complex is essential to convert dimers of the bacterial chromosome into monomers to permit their segregation at cell division. It also contributes to the segregational stability of plasmids. The chain is Tyrosine recombinase XerC from Psychromonas ingrahamii (strain DSM 17664 / CCUG 51855 / 37).